A 602-amino-acid chain; its full sequence is MSRRSLSLQFPLLLLLLLLPPPPVLLTDAGVPSPVNPCCYYPCQNQGVCVRFGLDHYQCDCTRTGYSGPNCTIPEIWTWLRSSLRPSPSFTHFLLTHGYWIWEFVNATFIREVLMRLVITVRSNLIPSPPTYNTAHDYISWESFSNVSYYTRILPSVPKDCPTPMGTKGKKQLPDIHLLAQRLLLRREFIPGPQGTNVLFAFFAQHFTHQFFKTSGKMGPGFTKALGHGVDLGHIYGDSLERQYHLRLFKDGKLKYQVLDGEVYPPSVEQASVLMRYPPGVPPEKQMAVGQEVFGLLPGLMLFSTIWLREHNRVCDLLKEEHPTWDDEQLFQTTRLILIGETIKIIIEEYVQHLSGYFLQLKFDPELLFRAQFQYRNRIALEFNHLYHWHPLMPDSFQVGSQEYSYEQFLFNTSMLVDYGVEALVDAFSRQRAGRIGGGRNFDYHVLHVAEDVIKESREMRLQSFNEYRKRFGLKPYTSFQEFTGEKEMAAELEELYGDIDALEFYPGLMLEKCQPNSLFGESMIEMGAPFSLKGLLGNPICSPEYWKPSTFGGDVGFNIVNTASLKKLVCLNTKTCPYVSFRVPDYPGDDGSVFVRPSTEL.

The signal sequence occupies residues 1-26 (MSRRSLSLQFPLLLLLLLLPPPPVLL). The EGF-like domain occupies 34 to 72 (PVNPCCYYPCQNQGVCVRFGLDHYQCDCTRTGYSGPNCT). Disulfide bonds link cysteine 38–cysteine 49, cysteine 39–cysteine 161, cysteine 43–cysteine 59, and cysteine 61–cysteine 71. Asparagine 70, asparagine 106, and asparagine 146 each carry an N-linked (GlcNAc...) asparagine glycan. Histidine 209 acts as the Proton acceptor in catalysis. Tyrosine 387 functions as the For cyclooxygenase activity in the catalytic mechanism. Histidine 390 provides a ligand contact to heme b. Asparagine 412 carries an N-linked (GlcNAc...) asparagine glycan. Residues cysteine 571 and cysteine 577 are joined by a disulfide bond.

The protein belongs to the prostaglandin G/H synthase family. In terms of assembly, homodimer. Requires heme b as cofactor.

The protein localises to the microsome membrane. Its subcellular location is the endoplasmic reticulum membrane. The catalysed reaction is (5Z,8Z,11Z,14Z)-eicosatetraenoate + AH2 + 2 O2 = prostaglandin H2 + A + H2O. The enzyme catalyses (5Z,8Z,11Z,14Z)-eicosatetraenoate + 2 O2 = prostaglandin G2. It catalyses the reaction prostaglandin G2 + AH2 = prostaglandin H2 + A + H2O. It carries out the reaction (9Z,12Z)-octadecadienoate + AH2 + O2 = (9R)-hydroxy-(10E,12Z)-octadecadienoate + A + H2O. The catalysed reaction is (9Z,12Z)-octadecadienoate + AH2 + O2 = (9S)-hydroxy-(10E,12Z)-octadecadienoate + A + H2O. The enzyme catalyses (9Z,12Z)-octadecadienoate + AH2 + O2 = (13S)-hydroxy-(9Z,11E)-octadecadienoate + A + H2O. It catalyses the reaction (9Z,12Z)-octadecadienoate + AH2 + O2 = (13R)-hydroxy-(9Z,11E)-octadecadienoate + A + H2O. The protein operates within lipid metabolism; prostaglandin biosynthesis. The cyclooxygenase activity is inhibited by nonsteroidal anti-inflammatory drugs (NSAIDs) including ibuprofen, flurbiprofen, ketoprofen, naproxen, flurbiprofen, anirolac, fenclofenac and diclofenac. In terms of biological role, dual cyclooxygenase and peroxidase that plays an important role in the biosynthesis pathway of prostanoids, a class of C20 oxylipins mainly derived from arachidonate ((5Z,8Z,11Z,14Z)-eicosatetraenoate, AA, C20:4(n-6)), with a particular role in the inflammatory response. The cyclooxygenase activity oxygenates AA to the hydroperoxy endoperoxide prostaglandin G2 (PGG2), and the peroxidase activity reduces PGG2 to the hydroxy endoperoxide prostaglandin H2 (PGH2), the precursor of all 2-series prostaglandins and thromboxanes. This complex transformation is initiated by abstraction of hydrogen at carbon 13 (with S-stereochemistry), followed by insertion of molecular O2 to form the endoperoxide bridge between carbon 9 and 11 that defines prostaglandins. The insertion of a second molecule of O2 (bis-oxygenase activity) yields a hydroperoxy group in PGG2 that is then reduced to PGH2 by two electrons. Involved in the constitutive production of prostanoids in particular in the stomach and platelets. In gastric epithelial cells, it is a key step in the generation of prostaglandins, such as prostaglandin E2 (PGE2), which plays an important role in cytoprotection. In platelets, it is involved in the generation of thromboxane A2 (TXA2), which promotes platelet activation and aggregation, vasoconstriction and proliferation of vascular smooth muscle cells. Can also use linoleate (LA, (9Z,12Z)-octadecadienoate, C18:2(n-6)) as substrate and produce hydroxyoctadecadienoates (HODEs) in a regio- and stereospecific manner, being (9R)-HODE ((9R)-hydroxy-(10E,12Z)-octadecadienoate) and (13S)-HODE ((13S)-hydroxy-(9Z,11E)-octadecadienoate) its major products. This is Prostaglandin G/H synthase 1 from Rattus norvegicus (Rat).